A 948-amino-acid chain; its full sequence is MDTSPYDFLKLYPWLSRGEADKGTLLDAFPGETFEQSLASDVAMRRAVQDDPAFGHQKLVETFLSEDTPYRELLLFHAPGTGKTCTVVSVAERAKEKGLTRGCIVLARGAALLRNFLHELVFNCGTGGRYIPEGYADMGDQERTRKMRKAVSSYYQFRTYETFAKSVATMSAEAIRARYDRFVIVMDEVHHLRSVQAEGVNTYSAISRFLRTVRGCVKMLLTGTPMTNEPGELADVLNLILPQDKTIRPEDGIFSNSGDLLKPDELAERVRGRVSYLKAARPDAGLTFAGEVLGGTGMTHLRLVRLEMSAFQSDAYASAWDQDAGDRNIFSNSRQCSLAVMPDRRWGSAAEARNPSQVRRMAGQNLAEYSVKYDYLVRVASSSPKTFAYCEYVNGSGLSLLSDILLANGWRRATGRETTPGKRFALLTASQKNIHKIVQRFNHEDNVDGAYISLLLGSRVVAEGLTFKEVRHTVILTPHWNYTETAQAIARSWRAGSHDRLKARGEAVAVTVHRLVAVPRGRDTPRSIDSDMYAVSEVKDKRIKAVERILMTSAADCSLLRSRNLYPSEFDGSRECEYGRCAYRCSNVSVEPGPLPALLGASAAEAVAQVRLDGGGDPAIMKVDMSTLWAEVTAGRRYVNRWGDGAVLRAEGGRLELSAPYGSSEEGRWGDFYKTRNLCYAKMDQDHLRADDLRDSLPQEVEELLTVSPVETIGETASAMPQEVATAILMACVQARADGKTLNVVRRDALLDFYKGFYAMGPSGWTVWLHARGANAKVYDGRRWNPADEDTLEFLAARSAKFTDTRIGYYGLYNPNLKDFCIRDVTQGKRDKVDLRKLTVGRRCVDWDQRTLVHIVARLMKIDGRRDFMPHATLREMRELAEQDPLHEPSDLTSKEACRRFLFWTQKGDNKFRRQDICKAMEKWFIENDLMEDNFDCGHQHKRRGKFA.

Residues 64–243 enclose the Helicase ATP-binding domain; the sequence is LSEDTPYREL…ADVLNLILPQ (180 aa). Residue 77 to 84 participates in ATP binding; the sequence is HAPGTGKT. Positions 187–190 match the DEAH box motif; the sequence is DEVH. The Helicase C-terminal domain occupies 371–554; that stretch reads VKYDYLVRVA…AVERILMTSA (184 aa).

This Frog virus 3 (isolate Goorha) (FV-3) protein is Putative helicase 009L.